We begin with the raw amino-acid sequence, 540 residues long: GMP synthase [glutamine-hydrolyzing] (540 aa).

The Glutamine amidotransferase type-1 domain occupies 29-222; it reads KILIVDFGSQ…VRKVAGLTGD (194 aa). The active-site Nucleophile is Cys-106. Catalysis depends on residues His-196 and Glu-198. Positions 223 to 415 constitute a GMPS ATP-PPase domain; that stretch reads WTMRAFREEA…LGLPEIFVGR (193 aa). Residue 250 to 256 participates in ATP binding; sequence SGGVDSA.

As to quaternary structure, homodimer.

It carries out the reaction XMP + L-glutamine + ATP + H2O = GMP + L-glutamate + AMP + diphosphate + 2 H(+). Its pathway is purine metabolism; GMP biosynthesis; GMP from XMP (L-Gln route): step 1/1. In terms of biological role, catalyzes the synthesis of GMP from XMP. The protein is GMP synthase [glutamine-hydrolyzing] of Rhodopseudomonas palustris (strain HaA2).